The chain runs to 759 residues: Phosphoribosylformylglycinamidine synthase subunit PurL (759 aa).

His48 is a catalytic residue. ATP-binding residues include Tyr51 and Lys91. Glu93 contributes to the Mg(2+) binding site. Residues 94–97 (SHNH) and Arg116 each bind substrate. His95 functions as the Proton acceptor in the catalytic mechanism. Asp117 contacts Mg(2+). Gln240 provides a ligand contact to substrate. Asp268 lines the Mg(2+) pocket. 317–319 (ESQ) is a substrate binding site. 2 residues coordinate ATP: Asn501 and Gly538. Asn539 serves as a coordination point for Mg(2+). Ser541 is a substrate binding site.

It belongs to the FGAMS family. As to quaternary structure, monomer. Part of the FGAM synthase complex composed of 1 PurL, 1 PurQ and 2 PurS subunits.

It localises to the cytoplasm. The catalysed reaction is N(2)-formyl-N(1)-(5-phospho-beta-D-ribosyl)glycinamide + L-glutamine + ATP + H2O = 2-formamido-N(1)-(5-O-phospho-beta-D-ribosyl)acetamidine + L-glutamate + ADP + phosphate + H(+). The protein operates within purine metabolism; IMP biosynthesis via de novo pathway; 5-amino-1-(5-phospho-D-ribosyl)imidazole from N(2)-formyl-N(1)-(5-phospho-D-ribosyl)glycinamide: step 1/2. Functionally, part of the phosphoribosylformylglycinamidine synthase complex involved in the purines biosynthetic pathway. Catalyzes the ATP-dependent conversion of formylglycinamide ribonucleotide (FGAR) and glutamine to yield formylglycinamidine ribonucleotide (FGAM) and glutamate. The FGAM synthase complex is composed of three subunits. PurQ produces an ammonia molecule by converting glutamine to glutamate. PurL transfers the ammonia molecule to FGAR to form FGAM in an ATP-dependent manner. PurS interacts with PurQ and PurL and is thought to assist in the transfer of the ammonia molecule from PurQ to PurL. This Chlorobaculum tepidum (strain ATCC 49652 / DSM 12025 / NBRC 103806 / TLS) (Chlorobium tepidum) protein is Phosphoribosylformylglycinamidine synthase subunit PurL.